The following is a 133-amino-acid chain: Small ribosomal subunit protein uS8 (133 aa).

The protein belongs to the universal ribosomal protein uS8 family. In terms of assembly, part of the 30S ribosomal subunit. Contacts proteins S5 and S12.

Its function is as follows. One of the primary rRNA binding proteins, it binds directly to 16S rRNA central domain where it helps coordinate assembly of the platform of the 30S subunit. This is Small ribosomal subunit protein uS8 from Orientia tsutsugamushi (strain Boryong) (Rickettsia tsutsugamushi).